We begin with the raw amino-acid sequence, 153 residues long: Membrane protein FAM174B (153 aa).

Residues 1 to 27 form the signal peptide; the sequence is MSALPPQPPPPLLLLLLALLAAPAALA. Topologically, residues 28 to 84 are extracellular; it reads RRAESASASQPEAEHQPPPGPGNATQLGSGMAGGGSSNSSVDAVVTRISSLLRDLPT. The interval 31–67 is disordered; it reads ESASASQPEAEHQPPPGPGNATQLGSGMAGGGSSNSS. Asn-50 carries N-linked (GlcNAc...) asparagine glycosylation. A helical membrane pass occupies residues 85-105; the sequence is LKATVIVACAFSALLIACLLL. Residues 106-153 lie on the Cytoplasmic side of the membrane; the sequence is RVFRLGKRLKKTRKYDIITTPAERVEMAPLNEEDDEDEDSTVFDIKYR.

It belongs to the FAM174 family.

The protein localises to the cell membrane. The protein resides in the golgi apparatus. Essential for Golgi structural integrity. The protein is Membrane protein FAM174B (Fam174b) of Mus musculus (Mouse).